We begin with the raw amino-acid sequence, 112 residues long: Large ribosomal subunit protein eL30 (112 aa).

This sequence belongs to the eukaryotic ribosomal protein eL30 family.

The polypeptide is Large ribosomal subunit protein eL30 (rpl30) (Dictyostelium discoideum (Social amoeba)).